We begin with the raw amino-acid sequence, 100 residues long: MRGTRRGPSGGWSPLGLALPRYPAGSVAASDPRSDTPPPRAPPPPPPLTTSAYRPHTHPAAESGARTRAEHARQHARHRPPEVTEPVHVPVLAGVCARVP.

The tract at residues 1–86 (MRGTRRGPSG…RHRPPEVTEP (86 aa)) is disordered. The segment covering 35 to 48 (DTPPPRAPPPPPPL) has biased composition (pro residues).

This is an uncharacterized protein from Human herpesvirus 6A (strain Uganda-1102) (HHV-6 variant A).